Here is a 160-residue protein sequence, read N- to C-terminus: Sperm acrosome-associated protein 5 (160 aa).

An N-terminal signal peptide occupies residues M1–A21. Positions K22 to R150 constitute a C-type lysozyme domain. Disulfide bonds link C27/C147, C51/C135, C85/C100, and C96/C114. Residue E56 is part of the active site.

The protein belongs to the glycosyl hydrolase 22 family.

It localises to the secreted. It carries out the reaction Hydrolysis of (1-&gt;4)-beta-linkages between N-acetylmuramic acid and N-acetyl-D-glucosamine residues in a peptidoglycan and between N-acetyl-D-glucosamine residues in chitodextrins.. This chain is Sperm acrosome-associated protein 5 (Spaca5), found in Mus musculus (Mouse).